We begin with the raw amino-acid sequence, 497 residues long: uncharacterized protein (497 aa).

Residues 1 to 16 (MSTTTETVTWSQYKPQ) show a composition bias toward polar residues. The interval 1–29 (MSTTTETVTWSQYKPQETQRRLSRSSTIT) is disordered. The residue at position 64 (Ser-64) is a Phosphoserine. A run of 6 helical transmembrane segments spans residues 86–106 (IALV…ALPI), 120–140 (FSGL…YPML), 155–175 (FRPL…YSLA), 180–200 (WLYL…MFLY), 222–242 (LNIL…GILA), and 258–278 (AGSW…SIFF). Ser-295 carries the phosphoserine modification. The next 6 helical transmembrane spans lie at 309–329 (FMLC…AGYQ), 348–368 (GNFL…STFL), 377–397 (IMLY…VLDA), 407–427 (FVLY…LVSL), 443–463 (VVQV…GAIF), and 468–488 (VGFI…LLYL).

The protein resides in the membrane. This is an uncharacterized protein from Schizosaccharomyces pombe (strain 972 / ATCC 24843) (Fission yeast).